The sequence spans 484 residues: Deoxyribodipyrimidine photo-lyase (484 aa).

Residues 3 to 132 enclose the Photolyase/cryptochrome alpha/beta domain; that stretch reads APILFWHRRD…RAVQLWDQLL (130 aa). Residues 36–38, Arg-51, and 101–109 contribute to the coenzyme F420-(gamma-Glu)n site; these read CLD and DIEPYGRDR. The interval 141-148 is DNA-binding; it reads GSGNPYSV. Tyr-228 is an FAD binding site. Residue Arg-232 participates in DNA binding. 240-247 contributes to the FAD binding site; sequence TSGLSPAL. A coenzyme F420-(gamma-Glu)n-binding site is contributed by Lys-248. 2 interaction with DNA regions span residues 283 to 290 and 349 to 350; these read ELAWREFY and NR. FAD-binding positions include 346-352, 380-382, and Asn-386; these read WMHNRCW and DGD. DNA is bound by residues Gln-411 and Lys-472.

The protein belongs to the DNA photolyase class-1 family. In terms of assembly, monomer. FAD serves as cofactor. The cofactor is coenzyme F420-(gamma-Glu)n.

The catalysed reaction is cyclobutadipyrimidine (in DNA) = 2 pyrimidine residues (in DNA).. In terms of biological role, involved in repair of UV radiation-induced DNA damage. Catalyzes the light-dependent monomerization (300-600 nm) of cyclobutyl pyrimidine dimers (in cis-syn configuration), which are formed between adjacent bases on the same DNA strand upon exposure to ultraviolet radiation. The chain is Deoxyribodipyrimidine photo-lyase (phr) from Synechococcus sp. (strain ATCC 27144 / PCC 6301 / SAUG 1402/1) (Anacystis nidulans).